The following is a 233-amino-acid chain: 2,3-bisphosphoglycerate-dependent phosphoglycerate mutase (233 aa).

Substrate contacts are provided by residues 8-15 (RHGESEWN), 21-22 (TG), Arg60, 87-90 (ERHY), Lys98, 114-115 (RR), and 183-184 (GN). His9 serves as the catalytic Tele-phosphohistidine intermediate. Glu87 (proton donor/acceptor) is an active-site residue.

Belongs to the phosphoglycerate mutase family. BPG-dependent PGAM subfamily.

It carries out the reaction (2R)-2-phosphoglycerate = (2R)-3-phosphoglycerate. It functions in the pathway carbohydrate degradation; glycolysis; pyruvate from D-glyceraldehyde 3-phosphate: step 3/5. Functionally, catalyzes the interconversion of 2-phosphoglycerate and 3-phosphoglycerate. This Lactococcus lactis subsp. cremoris (strain MG1363) protein is 2,3-bisphosphoglycerate-dependent phosphoglycerate mutase.